The sequence spans 276 residues: Glutamate 5-kinase (276 aa).

K14 is an ATP binding site. Substrate contacts are provided by S54, D141, and N157. Residues 177–178 and 219–225 each bind ATP; these read SD and TGGMLTK.

It belongs to the glutamate 5-kinase family.

Its subcellular location is the cytoplasm. It catalyses the reaction L-glutamate + ATP = L-glutamyl 5-phosphate + ADP. It functions in the pathway amino-acid biosynthesis; L-proline biosynthesis; L-glutamate 5-semialdehyde from L-glutamate: step 1/2. Functionally, catalyzes the transfer of a phosphate group to glutamate to form L-glutamate 5-phosphate. The polypeptide is Glutamate 5-kinase (Listeria innocua serovar 6a (strain ATCC BAA-680 / CLIP 11262)).